A 486-amino-acid polypeptide reads, in one-letter code: Ammonium transporter 2 member 1 (486 aa).

11 helical membrane passes run 29–49 (ASTL…GSIV), 57–77 (SAFM…LVGF), 127–147 (LVLF…GSVL), 161–181 (LWLL…GFLY), 190–210 (GGYV…YWVG), 225–245 (ILLM…FNGG), 252–272 (IAAS…LLMW), 285–305 (VIGA…GAGL), 309–329 (WAAV…MMIL), 343–363 (LAVF…TGLL), and 399–419 (FVIA…GLFI). Residues 454–470 (RHDLSRGGGGGDRDGPA) show a composition bias toward basic and acidic residues. The tract at residues 454-473 (RHDLSRGGGGGDRDGPAGER) is disordered.

It belongs to the ammonia transporter channel (TC 1.A.11.2) family. Expressed in roots and leaf blades and sheaths.

Its subcellular location is the cell membrane. Functionally, involved in ammonium transport. In Oryza sativa subsp. japonica (Rice), this protein is Ammonium transporter 2 member 1 (AMT2-1).